Here is a 293-residue protein sequence, read N- to C-terminus: Ribosomal protein L11 methyltransferase (293 aa).

4 residues coordinate S-adenosyl-L-methionine: threonine 145, glycine 166, aspartate 188, and asparagine 230.

The protein belongs to the methyltransferase superfamily. PrmA family.

It is found in the cytoplasm. It carries out the reaction L-lysyl-[protein] + 3 S-adenosyl-L-methionine = N(6),N(6),N(6)-trimethyl-L-lysyl-[protein] + 3 S-adenosyl-L-homocysteine + 3 H(+). Functionally, methylates ribosomal protein L11. This is Ribosomal protein L11 methyltransferase from Edwardsiella ictaluri (strain 93-146).